Here is a 565-residue protein sequence, read N- to C-terminus: Arginine--tRNA ligase (565 aa).

The 'HIGH' region signature appears at 128–138; sequence ANPTGPLHVGH.

The protein belongs to the class-I aminoacyl-tRNA synthetase family. Monomer.

The protein localises to the cytoplasm. The catalysed reaction is tRNA(Arg) + L-arginine + ATP = L-arginyl-tRNA(Arg) + AMP + diphosphate. This is Arginine--tRNA ligase from Delftia acidovorans (strain DSM 14801 / SPH-1).